A 39-amino-acid chain; its full sequence is Cytochrome b559 subunit beta (39 aa).

Residues 14–30 (WLAVHGLAVPTVFFLGS) form a helical membrane-spanning segment. H18 contacts heme.

It belongs to the PsbE/PsbF family. Heterodimer of an alpha subunit and a beta subunit. PSII is composed of 1 copy each of membrane proteins PsbA, PsbB, PsbC, PsbD, PsbE, PsbF, PsbH, PsbI, PsbJ, PsbK, PsbL, PsbM, PsbT, PsbX, PsbY, PsbZ, Psb30/Ycf12, at least 3 peripheral proteins of the oxygen-evolving complex and a large number of cofactors. It forms dimeric complexes. Requires heme b as cofactor.

It is found in the plastid. The protein resides in the chloroplast thylakoid membrane. In terms of biological role, this b-type cytochrome is tightly associated with the reaction center of photosystem II (PSII). PSII is a light-driven water:plastoquinone oxidoreductase that uses light energy to abstract electrons from H(2)O, generating O(2) and a proton gradient subsequently used for ATP formation. It consists of a core antenna complex that captures photons, and an electron transfer chain that converts photonic excitation into a charge separation. This chain is Cytochrome b559 subunit beta, found in Adiantum capillus-veneris (Maidenhair fern).